Consider the following 155-residue polypeptide: DNA-directed RNA polymerase 1A (155 aa).

Residue Asp88 is part of the active site.

Belongs to the phage and mitochondrial RNA polymerase family.

It carries out the reaction RNA(n) + a ribonucleoside 5'-triphosphate = RNA(n+1) + diphosphate. Its function is as follows. DNA-dependent RNA polymerase catalyzes the transcription of DNA into RNA using the four ribonucleoside triphosphates as substrates. The sequence is that of DNA-directed RNA polymerase 1A (RPOT1-SYL) from Nicotiana tabacum (Common tobacco).